Here is a 124-residue protein sequence, read N- to C-terminus: Testis-expressed protein 54 (124 aa).

The segment covering M1 to E10 has biased composition (basic and acidic residues). Disordered regions lie at residues M1–S77 and F90–G124. Residues M11–T30 show a composition bias toward acidic residues. 2 stretches are compositionally biased toward basic and acidic residues: residues R34–L50 and R101–G124.

Expressed in Testis.

This is Testis-expressed protein 54 from Homo sapiens (Human).